A 252-amino-acid polypeptide reads, in one-letter code: Probable transcriptional regulatory protein Lxx10750 (252 aa).

Belongs to the TACO1 family.

Its subcellular location is the cytoplasm. In Leifsonia xyli subsp. xyli (strain CTCB07), this protein is Probable transcriptional regulatory protein Lxx10750.